Here is a 688-residue protein sequence, read N- to C-terminus: UvrABC system protein B (688 aa).

In terms of domain architecture, Helicase ATP-binding spans 41 to 429 (ANFEAGLAKQ…AGEVTELVVR (389 aa)). 54-61 (GVTGSGKT) contributes to the ATP binding site. Positions 107-130 (YYDYYQPEAYVPSSDTFIEKDSSI) match the Beta-hairpin motif. The Helicase C-terminal domain occupies 446–612 (QVDDLMSEIH…SVERPISDIM (167 aa)). The disordered stretch occupies residues 616-646 (REDAAEKKSGKGRSKSRQVAEETPDYRAMKP). A compositionally biased stretch (basic and acidic residues) spans 633-645 (QVAEETPDYRAMK). Residues 650–685 (AGKLKSLEQKMYQHAKDLEFEAAAQIRDQIQKLKTA) enclose the UVR domain.

Belongs to the UvrB family. As to quaternary structure, forms a heterotetramer with UvrA during the search for lesions. Interacts with UvrC in an incision complex.

It is found in the cytoplasm. The UvrABC repair system catalyzes the recognition and processing of DNA lesions. A damage recognition complex composed of 2 UvrA and 2 UvrB subunits scans DNA for abnormalities. Upon binding of the UvrA(2)B(2) complex to a putative damaged site, the DNA wraps around one UvrB monomer. DNA wrap is dependent on ATP binding by UvrB and probably causes local melting of the DNA helix, facilitating insertion of UvrB beta-hairpin between the DNA strands. Then UvrB probes one DNA strand for the presence of a lesion. If a lesion is found the UvrA subunits dissociate and the UvrB-DNA preincision complex is formed. This complex is subsequently bound by UvrC and the second UvrB is released. If no lesion is found, the DNA wraps around the other UvrB subunit that will check the other stand for damage. The chain is UvrABC system protein B from Xanthomonas oryzae pv. oryzae (strain KACC10331 / KXO85).